The following is a 522-amino-acid chain: Glutathione reductase, mitochondrial (522 aa).

The transit peptide at methionine 1–alanine 43 directs the protein to the mitochondrion. The FAD site is built by serine 74 and glycine 75. Serine 74 provides a ligand contact to glutathione. Arginine 81 lines the glutathione pocket. Position 94 (glutamate 94) interacts with FAD. Position 97 is an N6-acetyllysine (lysine 97). Threonine 101, cysteine 102, and lysine 110 together coordinate FAD. An intrachain disulfide couples cysteine 102 to cysteine 107. Tyrosine 158 lines the glutathione pocket. Alanine 174 serves as a coordination point for FAD. Positions 239, 242, 245, 262, 268, and 334 each coordinate NADP(+). Aspartate 375 serves as a coordination point for FAD. Leucine 381 serves as a coordination point for NADP(+). Threonine 383 lines the FAD pocket. Arginine 391 contacts glutathione. Valine 414 is an NADP(+) binding site. Histidine 511 contributes to the FAD binding site. Residue histidine 511 is the Proton acceptor of the active site.

This sequence belongs to the class-I pyridine nucleotide-disulfide oxidoreductase family. As to quaternary structure, homodimer; disulfide-linked. Requires FAD as cofactor.

It localises to the mitochondrion. Its subcellular location is the cytoplasm. It catalyses the reaction 2 glutathione + NADP(+) = glutathione disulfide + NADPH + H(+). Its function is as follows. Catalyzes the reduction of glutathione disulfide (GSSG) to reduced glutathione (GSH). Constitutes the major mechanism to maintain a high GSH:GSSG ratio in the cytosol. The chain is Glutathione reductase, mitochondrial (GSR) from Callithrix jacchus (White-tufted-ear marmoset).